A 379-amino-acid polypeptide reads, in one-letter code: MLFHGITGGHIQGIMEEMERRSKSADNRLAKTIQVNGRETRMPPLSPEKPTLCAGCGGKISDRYYLLAVDKQWHLRCLKCCECKLALESELTCFAKDGSIYCKEDYYRRFSVQRCARCHLGISASEIVMRARESVYHLSCFTCTTCNKTLSTGDHFGMKENLVYRRAHFELLVQGDFHSQLNYTELSAKGGGLSALPYFTNGTGAVQKGRPRKRKSPALGVDIINYTSGCNENDTDLDRDQSYPPSQKTKRMRTSFKHHQLRTTKSYFAINHNPDAKDLKQLAQKTGLTKRVLQVWFQNARAKFRRNLLRQENGGGDKVEGPSLSAPASTDSAALTPTGAASTLSDLTSPSLNVGASVTPNMDSHESGSPSQTTLTNLF.

2 LIM zinc-binding domains span residues 51–112 and 113–175; these read TLCA…RFSV and QRCA…LVQG. Disordered stretches follow at residues 232 to 257 and 310 to 379; these read ENDTDLDRDQSYPPSQKTKRMRTSFK and RQEN…TNLF. Residues 248 to 257 show a composition bias toward basic residues; it reads KTKRMRTSFK. The segment at residues 249-308 is a DNA-binding region (homeobox); it reads TKRMRTSFKHHQLRTTKSYFAINHNPDAKDLKQLAQKTGLTKRVLQVWFQNARAKFRRNL. The segment covering 326 to 379 has biased composition (polar residues); sequence APASTDSAALTPTGAASTLSDLTSPSLNVGASVTPNMDSHESGSPSQTTLTNLF.

As to expression, isoform 1 and isoform 3 are expressed in ovary, testis, brain and heart. Isoform 4 and isoform 5 are expressed in brain.

Its subcellular location is the nucleus. Its function is as follows. May be involved in gonadal development. This Glandirana rugosa (Japanese wrinkled frog) protein is LIM/homeobox protein Lhx9 (lhx9).